Consider the following 376-residue polypeptide: Chaperone protein DnaJ (376 aa).

Residues 5 to 70 (DYYETLGVQK…EKRAAYDQYG (66 aa)) enclose the J domain. A CR-type zinc finger spans residues 133–211 (GTTKDIKINT…CHGDGRVHKK (79 aa)). Zn(2+)-binding residues include Cys146, Cys149, Cys163, Cys166, Cys185, Cys188, Cys199, and Cys202. 4 CXXCXGXG motif repeats span residues 146 to 153 (CDHCDGSG), 163 to 170 (CPTCHGHG), 185 to 192 (CPTCQGSG), and 199 to 206 (CKHCHGDG).

Belongs to the DnaJ family. As to quaternary structure, homodimer. Zn(2+) is required as a cofactor.

It localises to the cytoplasm. Functionally, participates actively in the response to hyperosmotic and heat shock by preventing the aggregation of stress-denatured proteins and by disaggregating proteins, also in an autonomous, DnaK-independent fashion. Unfolded proteins bind initially to DnaJ; upon interaction with the DnaJ-bound protein, DnaK hydrolyzes its bound ATP, resulting in the formation of a stable complex. GrpE releases ADP from DnaK; ATP binding to DnaK triggers the release of the substrate protein, thus completing the reaction cycle. Several rounds of ATP-dependent interactions between DnaJ, DnaK and GrpE are required for fully efficient folding. Also involved, together with DnaK and GrpE, in the DNA replication of plasmids through activation of initiation proteins. The sequence is that of Chaperone protein DnaJ from Mannheimia succiniciproducens (strain KCTC 0769BP / MBEL55E).